A 370-amino-acid polypeptide reads, in one-letter code: Sensor histidine kinase DesK (370 aa).

Residues 1 to 10 lie on the Extracellular side of the membrane; that stretch reads MIKNHFTFQK. The chain crosses the membrane as a helical span at residues 11–31; it reads LNGITPYIWTIFFILPFYFIW. Topologically, residues 32-36 are cytoplasmic; sequence KSSST. The chain crosses the membrane as a helical span at residues 37-57; sequence FVIIVGIILTLLFFSVYRFAF. At 58 to 70 the chain is on the extracellular side; the sequence is VSKGWTIYLWGFL. The helical transmembrane segment at 71 to 91 threads the bilayer; the sequence is LIGISTASITLFSYIYFAFFI. Residues 92–103 are Cytoplasmic-facing; the sequence is AYFIGNIKERVP. The chain crosses the membrane as a helical span at residues 104 to 124; that stretch reads FHILYYVHLISAAVAANFSLV. Residues 125–128 lie on the Extracellular side of the membrane; sequence LKKE. A helical transmembrane segment spans residues 129-149; sequence FFLTQIPFVVITLISAILLPF. Topologically, residues 150–370 are cytoplasmic; it reads SIKSRKERER…LTMAIPNNSK (221 aa). A Histidine kinase domain is found at 186–369; the sequence is DLHDTLGQKL…KLTMAIPNNS (184 aa). Histidine 188 is subject to Phosphohistidine; by autocatalysis.

The protein localises to the cell membrane. It catalyses the reaction ATP + protein L-histidine = ADP + protein N-phospho-L-histidine.. Functionally, member of the two-component regulatory system DesR/DesK, responsible for cold induction of the des gene coding for the Delta5 acyl-lipid desaturase. Acts as a sensor of the membrane fluidity. Probably activates DesR by phosphorylation. The sequence is that of Sensor histidine kinase DesK (desK) from Bacillus subtilis (strain 168).